The chain runs to 525 residues: GMP synthase [glutamine-hydrolyzing] (525 aa).

The Glutamine amidotransferase type-1 domain maps to 9-207 (RILILDFGSQ…VQDICGCEAL (199 aa)). Cys86 serves as the catalytic Nucleophile. Active-site residues include His181 and Glu183. Positions 208-400 (WTPSNIVEDA…LGLPYDMVYR (193 aa)) constitute a GMPS ATP-PPase domain. Residue 235-241 (SGGVDSS) coordinates ATP.

Homodimer.

The enzyme catalyses XMP + L-glutamine + ATP + H2O = GMP + L-glutamate + AMP + diphosphate + 2 H(+). The protein operates within purine metabolism; GMP biosynthesis; GMP from XMP (L-Gln route): step 1/1. Catalyzes the synthesis of GMP from XMP. The polypeptide is GMP synthase [glutamine-hydrolyzing] (Pseudomonas putida (strain W619)).